The sequence spans 339 residues: Heat-inducible transcription repressor HrcA (339 aa).

This sequence belongs to the HrcA family.

In terms of biological role, negative regulator of class I heat shock genes (grpE-dnaK-dnaJ and groELS operons). Prevents heat-shock induction of these operons. The sequence is that of Heat-inducible transcription repressor HrcA from Clostridium perfringens (strain SM101 / Type A).